A 466-amino-acid polypeptide reads, in one-letter code: Histidine--tRNA ligase (466 aa).

Belongs to the class-II aminoacyl-tRNA synthetase family. In terms of assembly, homodimer.

It localises to the cytoplasm. The enzyme catalyses tRNA(His) + L-histidine + ATP = L-histidyl-tRNA(His) + AMP + diphosphate + H(+). This is Histidine--tRNA ligase from Xylella fastidiosa (strain M23).